The primary structure comprises 604 residues: Beta-(1--&gt;2)glucan export ATP-binding/permease protein NdvA (604 aa).

Residues 21–311 (GWILAFANLL…VVSFINSVFM (291 aa)) form the ABC transmembrane type-1 domain. 6 helical membrane-spanning segments follow: residues 22–42 (WILA…PVLF), 68–88 (LLGA…AVAL), 146–166 (EHFA…YINW), 168–188 (LAIL…LVVH), 238–258 (LLAL…ITRA), and 285–305 (IVMF…VVSF). Positions 345–579 (VEFKDVSFSY…QGHFAALARA (235 aa)) constitute an ABC transporter domain. ATP is bound at residue 378 to 385 (GATGAGKS).

Belongs to the ABC transporter superfamily. Beta-(1--&gt;2)glucan exporter (TC 3.A.1.108.1) family. Homodimer.

The protein localises to the cell inner membrane. It catalyses the reaction [(1-&gt;2)-beta-D-glucosyl](n)(in) + ATP + H2O = [(1-&gt;2)-beta-D-glucosyl](n)(out) + ADP + phosphate + H(+). Involved in beta-(1--&gt;2)glucan export. Transmembrane domains (TMD) form a pore in the inner membrane and the ATP-binding domain (NBD) is responsible for energy generation. This chain is Beta-(1--&gt;2)glucan export ATP-binding/permease protein NdvA, found in Rhodopseudomonas palustris (strain BisB18).